The primary structure comprises 350 residues: Transmembrane protein 115 (350 aa).

Topologically, residues 1–19 (MQRALPGARQHLGAILASA) are cytoplasmic. A mediates homooligomerization region spans residues 1 to 205 (MQRALPGARQ…FGLLSSWVYL (205 aa)). A helical membrane pass occupies residues 20–40 (SVVVKALCAVVLFLYLLSFAV). The Lumenal segment spans residues 41–97 (DTGCLAVTPGYLFPPNFWIWTLATHGLMEQHVWDVAISLATVVVAGRLLEPLWGALE). The helical transmembrane segment at 98 to 118 (LLIFFSVVNVSVGLLGALAYL) threads the bilayer. At 119–126 (LTYMASFN) the chain is on the cytoplasmic side. A helical transmembrane segment spans residues 127–147 (LVYLFTIRIHGALGFLGGVLV). Over 148 to 165 (ALKQTMGDCVVLRVPQVR) the chain is Lumenal. The helical transmembrane segment at 166-186 (VSVVPMLLLALLLLLRLATLL) threads the bilayer. Residues 187 to 350 (QSPALASYGF…LITLETAPLL (164 aa)) are Cytoplasmic-facing. The tract at residues 206–229 (RFYQRHSRGRGDMADHFAFATFFP) is mediates localization to the Golgi. The disordered stretch occupies residues 299–350 (EDQSAWPSMDDDEEEAGAKTDSPLPLEEASTPPGKVTVPESSLITLETAPLL). Phosphothreonine is present on T329.

It belongs to the TMEM115 family. In terms of assembly, homooligomer. Interacts with COPB1. May interact with LMAN1. Interacts with the COG complex; probably through COG3.

It localises to the golgi apparatus. Its subcellular location is the golgi stack membrane. Functionally, may play a role in retrograde transport of proteins from the Golgi to the endoplasmic reticulum. May indirectly play a role in protein glycosylation in the Golgi. This is Transmembrane protein 115 from Mus musculus (Mouse).